The chain runs to 59 residues: MLFKSINQVININGYNKLNNNFNHQNNDLTSISYSQNSLSSSVKASAVFTRPQMFWTNL.

This is an uncharacterized protein from Dictyostelium discoideum (Social amoeba).